Reading from the N-terminus, the 180-residue chain is Probable galaptin lec-8 (180 aa).

The Galectin domain occupies 11-138; it reads SAHAIREQLR…AAHIDEISFS (128 aa).

This chain is Probable galaptin lec-8 (lec-8), found in Caenorhabditis elegans.